Consider the following 343-residue polypeptide: T-cell immunoglobulin and mucin domain-containing protein 4 (343 aa).

The N-terminal stretch at 1-22 (MSKGLLLLWLVTELWWLYLTPA) is a signal peptide. The 106-residue stretch at 23–128 (ASEDTIIGFL…WFNDVKKNVR (106 aa)) folds into the Ig-like V-type domain. Over 23 to 279 (ASEDTIIGFL…KSHQINSRQT (257 aa)) the chain is Extracellular. Disulfide bonds link cysteine 40–cysteine 112, cysteine 53–cysteine 64, and cysteine 59–cysteine 111. A glycan (N-linked (GlcNAc...) asparagine) is linked at asparagine 220. The segment at 239–258 (TGSNPGILPSTSQLTTQKTT) is disordered. The segment covering 248–258 (STSQLTTQKTT) has biased composition (low complexity). A helical transmembrane segment spans residues 280–300 (ILIIACCVGFVLMVLLFLAFL). At 301–343 (LRGKVTGANCLQRHKRPDNTEDSDSVLNDMSHGRDDEDGIFTL) the chain is on the cytoplasmic side. The interval 313-343 (RHKRPDNTEDSDSVLNDMSHGRDDEDGIFTL) is disordered. Serine 323, serine 325, and serine 331 each carry phosphoserine.

Belongs to the immunoglobulin superfamily. TIM family. In terms of assembly, homodimer. In terms of tissue distribution, predominantly expressed in lymphoid tissues, such as spleen, lymph nodes, and Peyer patches. Also expressed in fetal liver, salivary gland, and spleen stromal cells, predominantly in the marginal zone and to a lesser extent throughout the white pulp. Not expressed in bone marrow-derived cells. Expressed mainly by antigen presenting cells (APCs) in T- and B-cell areas, but not by T- or B-lymphocytes.

It localises to the membrane. Its function is as follows. Phosphatidylserine receptor that plays different role in immune response including phagocytosis of apoptotic cells and T-cell regulation. Controls T-cell activation in a bimodal fashion, decreasing the activation of naive T-cells by inducing cell cycle arrest, while increasing proliferation of activated T-cells by activating AKT1 and ERK1/2 phosphorylations and subsequent signaling pathways. Also plays a role in efferocytosis which is the process by which apoptotic cells are removed by phagocytic cells. Mechanistically, promotes the engulfment of apoptotic cells or exogenous particles by securing them to phagocytes through direct binding to phosphatidylserine present on apoptotic cells, while other engulfment receptors such as MERTK efficiently recognize apoptotic cells and mediate their ingestion. Additionally, promotes autophagy process by suppressing NLRP3 inflammasome activity via activation of STK11/PRKAA1 pathway in a phosphatidylserine-dependent mechanism. This chain is T-cell immunoglobulin and mucin domain-containing protein 4 (Timd4), found in Mus musculus (Mouse).